We begin with the raw amino-acid sequence, 311 residues long: MSGGRSPMEEAYARLRQVAEQQQKRGGFGGGGLPGGPRGAGMGLAGLVLLGGAAFVAQNALFNVDGGHRAIKYRRTTGVSKEIYAEGTHFVIPWFETPVTYDVRAKPRNVASLTGTKDLQMVNITCRVLSRPDIAALPQIYRTLGTDYDERVLPSIVNEVLKSVVAQFNASQLITQREMVAKLVRENLSRRAARFNILLDDVSLTHLAFSPEFTAAVEAKQVAQQEAQRAAFVVDKARQEKQAMVVKAQGEARSAELIGDAIKKSKAYVELKKIENARFIAQQMQESGSKNRLLLDSEGLGLNVFEDREKN.

The chain crosses the membrane as a helical span at residues 39–57 (GAGMGLAGLVLLGGAAFVA). The short motif at 141–144 (YRTL) is the AIM element.

The protein belongs to the prohibitin family. The mitochondrial prohibitin complex consists of two subunits (PHB1 and PHB2). The subunits assemble into a membrane-associated ring-shaped supercomplex of approximately 1 mDa. Interacts with ATG24/SNX4; the interaction is direct and plays a role in mitophagy.

The protein resides in the mitochondrion inner membrane. Its function is as follows. Prohibitin probably acts as a holdase/unfoldase for the stabilization of newly synthesized mitochondrial proteins. Involved in mitophagy. Required for the switch to necrotrophic growth. The sequence is that of Prohibitin-2 from Colletotrichum higginsianum (strain IMI 349063) (Crucifer anthracnose fungus).